The sequence spans 225 residues: Agamous-like MADS-box protein MADS1 (225 aa).

As to expression, expressed in flowers and seeds.

It is found in the nucleus. Probable transcription factor involved in flower development. This chain is Agamous-like MADS-box protein MADS1, found in Vitis vinifera (Grape).